A 1465-amino-acid polypeptide reads, in one-letter code: Claspin (1465 aa).

Positions 1-12 are enriched in low complexity; that stretch reads MSESLAETAAAA. Disordered stretches follow at residues 1–490, 544–566, and 585–636; these read MSES…KAKV, ATALAGGSPMPSRQPRKSVGLRM, and ATEF…TEDM. 7 positions are modified to phosphoserine: serine 45, serine 49, serine 52, serine 64, serine 75, serine 109, and serine 114. Residues 121–133 are compositionally biased toward basic and acidic residues; sequence QAEKKTQKEEGKQ. The segment covering 154–163 has biased composition (basic residues); sequence KSNKTKKAVK. The segment covering 205-216 has biased composition (basic and acidic residues); that stretch reads EYDHHQQHEKPA. Residues 217–228 show a composition bias toward basic residues; it reads KTQKSKKLAKKQ. 4 stretches are compositionally biased toward basic and acidic residues: residues 229–246, 254–263, 273–286, and 296–335; these read KQQEDDKEDNGTEQEKKK, KKSDKSKIDS, EDLKMYQEDQEPQK, and TNKDSKEESGEDQEHQEQKKPLKKIKLDNIDTKEDKEQIV. The stretch at 260 to 281 forms a coiled coil; it reads KIDSLMDNEEDAGEDLKMYQED. The span at 336 to 346 shows a compositional bias: basic residues; that stretch reads KPKKMAKKNKQ. Phosphoserine occurs at positions 350 and 354. A compositionally biased stretch (basic and acidic residues) spans 358-373; that stretch reads QNEKVDQDHDLKKMSS. The span at 375–388 shows a compositional bias: acidic residues; the sequence is NELEMGSDKEDQEM. Residues serine 381, serine 404, serine 406, serine 432, serine 434, serine 444, serine 456, serine 458, and serine 468 each carry the phosphoserine modification. Basic and acidic residues predominate over residues 400-417; sequence QRMDSESEDEIPKTESEK. A compositionally biased stretch (acidic residues) spans 432 to 441; sequence SESEPEETAE. Positions 456-470 are enriched in acidic residues; sequence SESEPELDNPEESAG. The stretch at 564-587 forms a coiled coil; it reads LRMTREELEAYAKLMEDRAKEATE. Residues 594 to 606 show a composition bias toward acidic residues; sequence ESDEEDDSENEEP. Threonine 693 is modified (phosphothreonine). Residues 839 to 874 are a coiled coil; that stretch reads LITKKRMEDLRKKQAEEQEKMAEDEEEGMDVDEEYE. The span at 845-859 shows a compositional bias: basic and acidic residues; that stretch reads MEDLRKKQAEEQEKM. The disordered stretch occupies residues 845-977; sequence MEDLRKKQAE…LDLLQTPKPS (133 aa). 3 stretches are compositionally biased toward acidic residues: residues 860–875, 913–942, and 960–969; these read AEDEEEGMDVDEEYEP, ADEDPEDNPVEDSEDEKNDSESEQECEANP, and DDNSDEDDLD. Serine 963 is subject to Phosphoserine. A Phosphothreonine modification is found at threonine 973. The residue at position 990 (serine 990) is a Phosphoserine. Residues 1058–1154 form a disordered region; it reads CSGTFATQLP…AEPVEEIPET (97 aa). Residues 1067 to 1076 show a composition bias toward low complexity; the sequence is PSQAPTQQPE. Serine 1093 and serine 1094 each carry phosphoserine. Over residues 1094–1103 the composition is skewed to acidic residues; it reads SDEEAQEDAL. The segment covering 1109–1123 has biased composition (basic residues); the sequence is RNKKLTKKRPKKKAK. Positions 1127 to 1154 are enriched in acidic residues; it reads SDDEDSDDEVEEFDEESDAEPVEEIPET. Serine 1287 bears the Phosphoserine mark.

This sequence belongs to the claspin family. Post-translationally, phosphorylated in response to DNA damage by IR and HU treatment. Phosphorylation does not require mei-41 or tefu. In terms of tissue distribution, detected in the ovary but not in the testis (at protein level).

The protein resides in the nucleus. Required for checkpoint signaling in response to DNA replication stress; either resulting from normal embryogenesis or induced by the DNA synthesis inhibitor hydroxyurea (HU). It is not required for the G2 arrest resulting from DNA double strand breaks induced by ionizing irradiation (IR). Necessary for the timely phosphorylation of Cdk1 at the mid-blastula transition. May have a minor role in maintaining genomic stability in mitotic cells. The chain is Claspin from Drosophila melanogaster (Fruit fly).